The sequence spans 163 residues: Inorganic pyrophosphatase (163 aa).

3 residues coordinate substrate: Lys21, Arg35, and Tyr47. Mg(2+) is bound by residues Asp57, Asp62, and Asp94. A substrate-binding site is contributed by Tyr131.

It belongs to the PPase family. As to quaternary structure, homohexamer. It depends on Mg(2+) as a cofactor.

The protein localises to the cytoplasm. The enzyme catalyses diphosphate + H2O = 2 phosphate + H(+). In terms of biological role, catalyzes the hydrolysis of inorganic pyrophosphate (PPi) forming two phosphate ions. The sequence is that of Inorganic pyrophosphatase from Halalkalibacterium halodurans (strain ATCC BAA-125 / DSM 18197 / FERM 7344 / JCM 9153 / C-125) (Bacillus halodurans).